A 193-amino-acid chain; its full sequence is Inner membrane-spanning protein YciB (193 aa).

6 consecutive transmembrane segments (helical) span residues 5–25 (TLDA…FYIY), 36–56 (IIAA…LMFV), 67–87 (WLVV…QDDF), 93–113 (APII…FLGG), 138–158 (VWVG…FVWV), and 164–184 (FTAF…FWFL).

It belongs to the YciB family.

It is found in the cell inner membrane. Functionally, plays a role in cell envelope biogenesis, maintenance of cell envelope integrity and membrane homeostasis. This Vitreoscilla sp. (strain C1) protein is Inner membrane-spanning protein YciB.